The following is a 463-amino-acid chain: Glucagon-like peptide 1 receptor (463 aa).

Residues 1 to 21 form the signal peptide; sequence MASTPSLLRLALLLLGAVGRA. The Extracellular segment spans residues 22–139; that stretch reads GPRPQGTTVS…KRGERNFPEE (118 aa). 3 disulfides stabilise this stretch: Cys46–Cys71, Cys62–Cys104, and Cys85–Cys126. N-linked (GlcNAc...) asparagine glycosylation is found at Asn63, Asn82, and Asn115. A helical transmembrane segment spans residues 140 to 164; it reads QLLSLYIIYTVGYALSFSALVIASA. Residues 165–175 lie on the Cytoplasmic side of the membrane; that stretch reads ILVGFRHLHCT. Residues 176 to 201 form a helical membrane-spanning segment; sequence RNYIHLNLFASFILRALSVFIKDAAL. Residues 202–227 are Extracellular-facing; it reads KWMYSTAAQQHQWDGLLSYQDSLGCR. Cysteines 226 and 296 form a disulfide. A helical transmembrane segment spans residues 228 to 251; it reads LVFLLMQYCVAANYYWLLVEGVYL. Over 252 to 265 the chain is Cytoplasmic; sequence YTLLAFSVFSEQRI. The chain crosses the membrane as a helical span at residues 266-290; it reads FKLYLSIGWGVPLLFVIPWGIVKYL. Topologically, residues 291 to 305 are extracellular; that stretch reads YEDEGCWTRNSNMNY. A helical membrane pass occupies residues 306–328; sequence WLIIRLPILFAIGVNFLIFIRVI. Residues 329–348 lie on the Cytoplasmic side of the membrane; that stretch reads CIVVSKLKANLMCKTDIKCR. Residue Cys341 is modified to ADP-ribosylcysteine. The residue at position 348 (Arg348) is an ADP-ribosylarginine. The helical transmembrane segment at 349 to 370 threads the bilayer; that stretch reads LAKSTLTLIPLLGTHEVIFAFV. The tract at residues 352–355 is important for allosteric inhibitor binding; it reads STLT. Residues 371–383 are Extracellular-facing; the sequence is MDEHARGTLRFIK. Residues 384–404 traverse the membrane as a helical segment; it reads LFTELSFTSFQGLMVAILYCF. Over 405 to 463 the chain is Cytoplasmic; the sequence is VNNEVQMEFRKCWERWRLEHLNIQRDCSMKPLKCPTSSVSSGATVGSSVYAATCQSSYS.

This sequence belongs to the G-protein coupled receptor 2 family. As to quaternary structure, may form homodimers and heterodimers with GIPR. N-glycosylation enhances cell surface expression and lengthens receptor half-life by preventing degradation in the ER. As to expression, detected in pancreatic islets (at protein level). Detected in pancreatic islets and lungs.

It localises to the cell membrane. In terms of biological role, G-protein coupled receptor for glucagon-like peptide 1 (GLP-1). Ligand binding triggers activation of a signaling cascade that leads to the activation of adenylyl cyclase and increased intracellular cAMP levels. Plays a role in regulating insulin secretion in response to GLP-1. The protein is Glucagon-like peptide 1 receptor (Glp1r) of Mus musculus (Mouse).